Consider the following 533-residue polypeptide: Cytochrome P450 monooxygenase ltmK (533 aa).

The chain crosses the membrane as a helical span at residues 27-47 (VHWLQVIVALLVLIVCIFLYW). An N-linked (GlcNAc...) asparagine glycan is attached at Asn-116. Cys-473 serves as a coordination point for heme. A glycan (N-linked (GlcNAc...) asparagine) is linked at Asn-528.

The protein belongs to the cytochrome P450 family. Heme serves as cofactor.

Its subcellular location is the membrane. The protein operates within secondary metabolite biosynthesis. Its function is as follows. Cytochrome P450 monooxygenase; part of the gene clusters that mediates the biosynthesis of lolitrems, indole-diterpene mycotoxins that are potent tremorgens in mammals, and are synthesized by clavicipitaceous fungal endophytes in association with their grass hosts. The geranylgeranyl diphosphate (GGPP) synthase ltmG is proposed to catalyze the first step in lolitrem biosynthesis. LtmG catalyzes a series of iterative condensations of isopentenyl diphosphate (IPP) with dimethylallyl diphosphate (DMAPP), geranyl diphosphate (GPP), and farnesyl diphosphate (FPP), to form GGPP. GGPP then condenses with indole-3-glycerol phosphate to form 3-geranylgeranylindole, an acyclic intermediate, to be incorporated into paxilline. Either ltmG or ltmC could be responsible for this step, as both are putative prenyl transferases. The FAD-dependent monooxygenase ltmM then catalyzes the epoxidation of the two terminal alkenes of the geranylgeranyl moiety, which is subsequently cyclized by ltmB, to paspaline. The cytochrome P450 monooxygenases ltmQ and ltmP can sequentially oxidize paspaline to terpendole E and terpendole F. Alternatively, ltmP converts paspaline to an intermediate which is oxidized by ltmQ to terpendole F. LtmF, ltmK, ltmE and ltmJ appear to be unique to the epichloe endophytes. The prenyltransferase ltmF is involved in the 27-hydroxyl-O-prenylation. The cytochrome P450 monooxygenase ltmK is required for the oxidative acetal ring formation. The multi-functional prenyltransferase ltmE is required for C20- and C21-prenylations of the indole ring of paspalanes and acts together with the cytochrome P450 monooxygenase ltmJ to yield lolitremanes by multiple oxidations and ring closures. The stereoisomer pairs of lolitriol and lolitrem N or lolitrem B and lolitrem F may be attributed to variations in the way in which ring closure can occur under the action of ltmJ. While the major product of this pathway is lolitrem B, the prenyl transferases and cytochrome P450 monooxygenases identified in this pathway have a remarkable versatility in their regio- and stereo-specificities to generate a diverse range of metabolites that are products of a metabolic grid rather than a linear pathway. The sequence is that of Cytochrome P450 monooxygenase ltmK from Epichloe festucae var. lolii (Neotyphodium lolii).